Consider the following 984-residue polypeptide: Glutamate [NMDA] receptor subunit 1 (984 aa).

A signal peptide spans 1–24 (MAAAFAYRWLLCAAGIVNVLPIGA). Over 25-570 (QRHTASDNPS…TLVSFLQPFS (546 aa)) the chain is Extracellular. N-linked (GlcNAc...) asparagine glycans are attached at residues asparagine 255, asparagine 311, asparagine 342, asparagine 394, asparagine 451, asparagine 478, and asparagine 498. Residues 527 to 529 (PLT) and arginine 534 contribute to the glycine site. Residues 571-591 (NTLWILVMVSVHVVALVLYLL) form a helical membrane-spanning segment. The Cytoplasmic portion of the chain corresponds to 592–648 (DRFSPFGRFKLSHSDSNEEKALNLSSAVWFAWGVLLNSGIGEGTPRSFSARVLGMVW). Residues 649 to 669 (AGFAMIIVASYTANLAAFLVL) traverse the membrane as a helical segment. The Extracellular portion of the chain corresponds to 670–828 (ERPKTKLSGI…KTPNTLGLKN (159 aa)). N-linked (GlcNAc...) asparagine glycosylation occurs at asparagine 690. Glycine is bound by residues serine 700 and aspartate 744. The helical transmembrane segment at 829–849 (MAGVFILVGVGIAGGVGLIII) threads the bilayer. Topologically, residues 850 to 984 (EVIYKKHQVK…YTSDVSHLVV (135 aa)) are cytoplasmic. The tract at residues 947-984 (KSGLVPPALGLGKTRPQQNPLPPRYSPGYTSDVSHLVV) is disordered. The segment covering 974–984 (GYTSDVSHLVV) has biased composition (polar residues).

The protein belongs to the glutamate-gated ion channel (TC 1.A.10.1) family. As to quaternary structure, forms a heteromeric NMDA channel with Nmdar2.

The protein localises to the cell membrane. The protein resides in the postsynaptic cell membrane. It is found in the postsynaptic density. Its function is as follows. NMDA receptor subtype of glutamate-gated ion channels with high calcium permeability and voltage-dependent sensitivity to magnesium. Mediated by glycine. This protein plays a key role in synaptic plasticity, synaptogenesis, excitotoxicity, memory acquisition and learning. It mediates neuronal functions in glutamate neurotransmission. Is involved in the cell surface targeting of NMDA receptors. Plays a role in associative learning and in long-term memory consolidation. This Drosophila virilis (Fruit fly) protein is Glutamate [NMDA] receptor subunit 1.